Reading from the N-terminus, the 310-residue chain is MTNIVHKLTNSDIQQLMSKIPFETSQLSQGMKAKTKYKGTSISIYNSNKVMFQGKDAERIAAQLLPNVTKSQPSSKKASTTKQTISYNQFQCIGSDEAGSGDYFGPLTVCAAYVSHKNVQILKALGVDDSKKLTDTKIVELAEQLVTFIPHSLLVMNNEKYNEKQKAGWSQVKMKAVLHNEAIKNVTQKIDTTELDYIVIDQFAEAGVYKRYALSDLPFSNKTKFETKGESKSIAIAAASIISRYAFVKHMDRLTQSVKTDIPKGASNKVDLTAAKIIERKGIAYLDSISKKHFANRKKAENLVQKKYND.

Positions F90–K306 constitute an RNase H type-2 domain. Residues D96, E97, and D201 each contribute to the a divalent metal cation site.

It belongs to the RNase HII family. RnhC subfamily. Mn(2+) serves as cofactor. Requires Mg(2+) as cofactor.

The protein resides in the cytoplasm. The enzyme catalyses Endonucleolytic cleavage to 5'-phosphomonoester.. In terms of biological role, endonuclease that specifically degrades the RNA of RNA-DNA hybrids. The sequence is that of Ribonuclease HIII from Staphylococcus saprophyticus subsp. saprophyticus (strain ATCC 15305 / DSM 20229 / NCIMB 8711 / NCTC 7292 / S-41).